Here is a 453-residue protein sequence, read N- to C-terminus: MDTDLISNLPDDVLGKILSLVPTKLAAATSVLSKRWRNLLPLVDSLDFDETMLFYPDNKDGEDEASSYESGQRRRHSFSHFVDKTLALLSNAPLTEKFSLKCYHEDDGARINRWIRTALERGCLELNLEAANYLPIDSQYFTSNTLVKLTISDGFYPGGHLLPFGGVFFPALKTLTLVSVCFTSVEMINFFIHGCPALEELFLCVWMQYMSSPNVKRVTITSDFDDDIQRPSMVLKTPSLVYLDYSSYVAGNYYVVLDSLVEARLDLRLYEPIIYDEDGLWNAEVFGNITNLIEAIRTIKILHLSPSSLEVFYYCCDLPVLEDLVNLSIESDKEKGWEVMPRLLNKSPNLQTLVVKGLVHRVTYCCGDACACIRMKDREIVSCLSRCRVKVLKILGYGGSFRELKQMRHFLGKLKCLETVKVGVKEGSKKSNYLVANVMALPRVSSKCKIQFI.

The 49-residue stretch at 3-51 (TDLISNLPDDVLGKILSLVPTKLAAATSVLSKRWRNLLPLVDSLDFDET) folds into the F-box domain.

As to quaternary structure, part of a SCF (ASK-cullin-F-box) protein ligase complex.

It functions in the pathway protein modification; protein ubiquitination. Functionally, component of SCF(ASK-cullin-F-box) E3 ubiquitin ligase complexes, which may mediate the ubiquitination and subsequent proteasomal degradation of target proteins. The protein is F-box protein At4g27050 of Arabidopsis thaliana (Mouse-ear cress).